The following is a 114-amino-acid chain: T cell receptor beta variable 5-5 (114 aa).

Residues 1–21 (MGPGLLCWVLLCLLGAGPVDA) form the signal peptide. The Ig-like domain occupies 22–114 (GVTQSPTHLI…SALYLCASSL (93 aa)). An intrachain disulfide couples cysteine 42 to cysteine 110. N-linked (GlcNAc...) asparagine glycosylation occurs at asparagine 90.

In terms of assembly, alpha-beta TR is a heterodimer composed of an alpha and beta chain; disulfide-linked. The alpha-beta TR is associated with the transmembrane signaling CD3 coreceptor proteins to form the TR-CD3 (TcR or TCR). The assembly of alpha-beta TR heterodimers with CD3 occurs in the endoplasmic reticulum where a single alpha-beta TR heterodimer associates with one CD3D-CD3E heterodimer, one CD3G-CD3E heterodimer and one CD247 homodimer forming a stable octameric structure. CD3D-CD3E and CD3G-CD3E heterodimers preferentially associate with TR alpha and TR beta chains, respectively. The association of the CD247 homodimer is the last step of TcR assembly in the endoplasmic reticulum and is required for transport to the cell surface.

It is found in the cell membrane. Its function is as follows. V region of the variable domain of T cell receptor (TR) beta chain that participates in the antigen recognition. Alpha-beta T cell receptors are antigen specific receptors which are essential to the immune response and are present on the cell surface of T lymphocytes. Recognize peptide-major histocompatibility (MH) (pMH) complexes that are displayed by antigen presenting cells (APC), a prerequisite for efficient T cell adaptive immunity against pathogens. Binding of alpha-beta TR to pMH complex initiates TR-CD3 clustering on the cell surface and intracellular activation of LCK that phosphorylates the ITAM motifs of CD3G, CD3D, CD3E and CD247 enabling the recruitment of ZAP70. In turn ZAP70 phosphorylates LAT, which recruits numerous signaling molecules to form the LAT signalosome. The LAT signalosome propagates signal branching to three major signaling pathways, the calcium, the mitogen-activated protein kinase (MAPK) kinase and the nuclear factor NF-kappa-B (NF-kB) pathways, leading to the mobilization of transcription factors that are critical for gene expression and essential for T cell growth and differentiation. The T cell repertoire is generated in the thymus, by V-(D)-J rearrangement. This repertoire is then shaped by intrathymic selection events to generate a peripheral T cell pool of self-MH restricted, non-autoaggressive T cells. Post-thymic interaction of alpha-beta TR with the pMH complexes shapes TR structural and functional avidity. The sequence is that of T cell receptor beta variable 5-5 from Homo sapiens (Human).